Consider the following 274-residue polypeptide: Imidazole glycerol phosphate synthase subunit HisF (274 aa).

Residues D11 and D134 contribute to the active site.

This sequence belongs to the HisA/HisF family. In terms of assembly, heterodimer of HisH and HisF.

Its subcellular location is the cytoplasm. The enzyme catalyses 5-[(5-phospho-1-deoxy-D-ribulos-1-ylimino)methylamino]-1-(5-phospho-beta-D-ribosyl)imidazole-4-carboxamide + L-glutamine = D-erythro-1-(imidazol-4-yl)glycerol 3-phosphate + 5-amino-1-(5-phospho-beta-D-ribosyl)imidazole-4-carboxamide + L-glutamate + H(+). It functions in the pathway amino-acid biosynthesis; L-histidine biosynthesis; L-histidine from 5-phospho-alpha-D-ribose 1-diphosphate: step 5/9. Functionally, IGPS catalyzes the conversion of PRFAR and glutamine to IGP, AICAR and glutamate. The HisF subunit catalyzes the cyclization activity that produces IGP and AICAR from PRFAR using the ammonia provided by the HisH subunit. This Methanobrevibacter smithii (strain ATCC 35061 / DSM 861 / OCM 144 / PS) protein is Imidazole glycerol phosphate synthase subunit HisF.